The chain runs to 87 residues: Large ribosomal subunit protein bL27 (87 aa).

The interval 1 to 20 (MARKRGGSGSKNGRDSNPKY) is disordered.

Belongs to the bacterial ribosomal protein bL27 family.

This Treponema pallidum (strain Nichols) protein is Large ribosomal subunit protein bL27 (rpmA).